Consider the following 185-residue polypeptide: Large ribosomal subunit protein uL6m (185 aa).

It belongs to the universal ribosomal protein uL6 family.

The protein resides in the mitochondrion. This Reclinomonas americana protein is Large ribosomal subunit protein uL6m (RPL6).